The primary structure comprises 82 residues: Large ribosomal subunit protein uL23 (82 aa).

Belongs to the universal ribosomal protein uL23 family. Part of the 50S ribosomal subunit. Contacts protein L29.

Binds to 23S rRNA. One of the proteins that surrounds the polypeptide exit tunnel on the outside of the ribosome. The sequence is that of Large ribosomal subunit protein uL23 from Methanosarcina barkeri (strain Fusaro / DSM 804).